The following is a 490-amino-acid chain: MDNSRDKIHILGAVSDTFQEVQHPCSILKYKVYFVTTDTFYCKYLTASFTGLKKFPTERQLPLECHFNHIDWDLGNNFKVKEGVFYTFDIIAPLPRCTPRTIVTQEGSISYKLTVKLYTEDDCRMPKSANVPVVVPFTLNPDRIPESQHIRYGAPLNDACFTSLSMKSSKYSFLTAFFKYPQQCYKGPGCVCPLLIDLESEDADVLSSTPGSAGTDDPHIDPIAINSQDSQFIFQDRLPRLSNDCDMKGRSSLSRTSSPVVEKKLKRYYIRVLLVQSITFFLFNDAFRNSITVLFEDGKWSPPIVPGLHSRVEFTIPVNDLIHGSCTENPHLLVRHSIYVSIHSREPSSLSRKLAPPFLRTHKAKSNSLFSMKRPSSSSSSLSGSWHGDTENSVKQSLASPSEASLPNLSKYSRKNAKKLNEWLDSLDFKLPIYLFHRKLESELSHLPPYSPYRDSYFYLEDDDGDADTPSTASLDYFSNISPPDFLNKA.

Positions 370-385 (FSMKRPSSSSSSLSGS) are enriched in low complexity. The disordered stretch occupies residues 370–406 (FSMKRPSSSSSSLSGSWHGDTENSVKQSLASPSEASL). Residues 391–406 (ENSVKQSLASPSEASL) are compositionally biased toward polar residues.

It is found in the cytoplasm. It localises to the nucleus. This is an uncharacterized protein from Schizosaccharomyces pombe (strain 972 / ATCC 24843) (Fission yeast).